The primary structure comprises 50 residues: Major pollen allergen Ole e 6 (50 aa).

Intrachain disulfides connect Cys8–Cys34, Cys12–Cys30, and Cys16–Cys26.

As to expression, expressed in pollen.

The polypeptide is Major pollen allergen Ole e 6 (OLE6) (Olea europaea (Common olive)).